A 175-amino-acid chain; its full sequence is Shikimate kinase (175 aa).

12–17 (GAGKTT) is an ATP binding site. Thr16 is a Mg(2+) binding site. Positions 34, 58, and 80 each coordinate substrate. Residue Arg117 coordinates ATP. Position 136 (Arg136) interacts with substrate.

This sequence belongs to the shikimate kinase family. In terms of assembly, monomer. The cofactor is Mg(2+).

It is found in the cytoplasm. The catalysed reaction is shikimate + ATP = 3-phosphoshikimate + ADP + H(+). Its pathway is metabolic intermediate biosynthesis; chorismate biosynthesis; chorismate from D-erythrose 4-phosphate and phosphoenolpyruvate: step 5/7. Functionally, catalyzes the specific phosphorylation of the 3-hydroxyl group of shikimic acid using ATP as a cosubstrate. The protein is Shikimate kinase of Saccharopolyspora erythraea (strain ATCC 11635 / DSM 40517 / JCM 4748 / NBRC 13426 / NCIMB 8594 / NRRL 2338).